A 137-amino-acid polypeptide reads, in one-letter code: Putative protein YjhV (137 aa).

The span at 1-16 (MVGYHQTNQKTDTGKT) shows a compositional bias: polar residues. The segment at 1–20 (MVGYHQTNQKTDTGKTLTRR) is disordered.

In Escherichia coli (strain K12), this protein is Putative protein YjhV (yjhV).